The chain runs to 693 residues: Golgin subfamily A member 6A (693 aa).

Residues 14–611 adopt a coiled-coil conformation; sequence LEESRQNKLA…KLLELQELVL (598 aa). Disordered regions lie at residues 20–69, 497–547, and 661–693; these read NKLA…PGDS, LPGE…GTEQ, and NVEPAPGAAREGSPHDNPTVQQIVQLSPVMQDT. The segment covering 54–69 has biased composition (polar residues); the sequence is SPETTTSGGCHSPGDS. Residues 537 to 547 show a composition bias toward basic and acidic residues; the sequence is LPKEKADGTEQ. Residues 676–693 are compositionally biased toward polar residues; that stretch reads DNPTVQQIVQLSPVMQDT.

The protein belongs to the GOLGA6 family. Highly expressed in seminiferous tubes in testis. Highly expressed in spermatids, barely detectable in late pachytene spermatocytes, and not detectable in spermatogonia. Detected at intermediate levels in pancreas and lymph nodes, and at much lower levels in spleen, peripheral blood leukocytes, skeletal muscle, liver, lung, placenta, brain and heart.

This chain is Golgin subfamily A member 6A (GOLGA6A), found in Homo sapiens (Human).